Reading from the N-terminus, the 471-residue chain is Glutamate--tRNA ligase (471 aa).

The 'HIGH' region motif lies at 9–19 (PSPTGYLHVGG). Residues cysteine 98, cysteine 100, cysteine 125, and histidine 127 each contribute to the Zn(2+) site. Residues 237-241 (KLSKR) carry the 'KMSKS' region motif. Lysine 240 contributes to the ATP binding site.

The protein belongs to the class-I aminoacyl-tRNA synthetase family. Glutamate--tRNA ligase type 1 subfamily. In terms of assembly, monomer. It depends on Zn(2+) as a cofactor.

The protein localises to the cytoplasm. It catalyses the reaction tRNA(Glu) + L-glutamate + ATP = L-glutamyl-tRNA(Glu) + AMP + diphosphate. Catalyzes the attachment of glutamate to tRNA(Glu) in a two-step reaction: glutamate is first activated by ATP to form Glu-AMP and then transferred to the acceptor end of tRNA(Glu). In Salmonella schwarzengrund (strain CVM19633), this protein is Glutamate--tRNA ligase.